A 309-amino-acid chain; its full sequence is Porphobilinogen deaminase (309 aa).

At Cys-241 the chain carries S-(dipyrrolylmethanemethyl)cysteine.

Belongs to the HMBS family. Monomer. Dipyrromethane serves as cofactor.

It catalyses the reaction 4 porphobilinogen + H2O = hydroxymethylbilane + 4 NH4(+). It functions in the pathway porphyrin-containing compound metabolism; protoporphyrin-IX biosynthesis; coproporphyrinogen-III from 5-aminolevulinate: step 2/4. Its function is as follows. Tetrapolymerization of the monopyrrole PBG into the hydroxymethylbilane pre-uroporphyrinogen in several discrete steps. This is Porphobilinogen deaminase from Bacillus mycoides (strain KBAB4) (Bacillus weihenstephanensis).